Here is a 186-residue protein sequence, read N- to C-terminus: Probable GTP-binding protein EngB (186 aa).

Positions 18–186 (DKKEICFIGR…LKKLIGSVIL (169 aa)) constitute an EngB-type G domain. Residues 26 to 33 (GRSNVGKS), 52 to 56 (GRTQL), 69 to 72 (DLPG), 135 to 138 (NKAD), and 166 to 168 (VSA) each bind GTP. Ser33 and Thr54 together coordinate Mg(2+).

The protein belongs to the TRAFAC class TrmE-Era-EngA-EngB-Septin-like GTPase superfamily. EngB GTPase family. Mg(2+) is required as a cofactor.

Necessary for normal cell division and for the maintenance of normal septation. The sequence is that of Probable GTP-binding protein EngB from Malacoplasma penetrans (strain HF-2) (Mycoplasma penetrans).